A 235-amino-acid chain; its full sequence is Probable flavin-dependent thymidylate synthase (235 aa).

One can recognise a ThyX domain in the interval 1 to 229 (MKVQLIASTI…PNTYQDIPTE (229 aa)). FAD contacts are provided by residues serine 70 and 93–95 (RHR). DUMP contacts are provided by residues 90–93 (ELER), 103–105 (SQR), and arginine 168. Positions 93-103 (RHRHLSFSVVS) match the ThyX motif motif. Residue 184–186 (NHR) coordinates FAD. Arginine 195 serves as a coordination point for dUMP. Arginine 195 serves as the catalytic Involved in ionization of N3 of dUMP, leading to its activation.

It belongs to the thymidylate synthase ThyX family. Homotetramer. FAD serves as cofactor.

It catalyses the reaction dUMP + (6R)-5,10-methylene-5,6,7,8-tetrahydrofolate + NADPH + H(+) = dTMP + (6S)-5,6,7,8-tetrahydrofolate + NADP(+). Its pathway is pyrimidine metabolism; dTTP biosynthesis. Its function is as follows. Catalyzes the reductive methylation of 2'-deoxyuridine-5'-monophosphate (dUMP) to 2'-deoxythymidine-5'-monophosphate (dTMP) while utilizing 5,10-methylenetetrahydrofolate (mTHF) as the methyl donor, and NADPH and FADH(2) as the reductant. The sequence is that of Probable flavin-dependent thymidylate synthase (48) from Mycobacterium (Mycobacteriophage D29).